A 202-amino-acid polypeptide reads, in one-letter code: Glycerol-3-phosphate acyltransferase (202 aa).

Helical transmembrane passes span 11–31, 87–107, 116–136, and 158–178; these read VLIA…GLIL, PALA…WLGF, FIGV…AIWL, and LILW…LAAL.

This sequence belongs to the PlsY family. Probably interacts with PlsX.

The protein resides in the cell inner membrane. It carries out the reaction an acyl phosphate + sn-glycerol 3-phosphate = a 1-acyl-sn-glycero-3-phosphate + phosphate. The protein operates within lipid metabolism; phospholipid metabolism. In terms of biological role, catalyzes the transfer of an acyl group from acyl-phosphate (acyl-PO(4)) to glycerol-3-phosphate (G3P) to form lysophosphatidic acid (LPA). This enzyme utilizes acyl-phosphate as fatty acyl donor, but not acyl-CoA or acyl-ACP. The protein is Glycerol-3-phosphate acyltransferase of Methylorubrum extorquens (strain PA1) (Methylobacterium extorquens).